We begin with the raw amino-acid sequence, 245 residues long: 2,3-bisphosphoglycerate-dependent phosphoglycerate mutase 1 (245 aa).

Substrate is bound by residues 8–15 (RHGQSLWN), 21–22 (TG), Arg60, 87–90 (ERHY), Lys98, 114–115 (RR), and 183–184 (GN). His9 acts as the Tele-phosphohistidine intermediate in catalysis. The Proton donor/acceptor role is filled by Glu87.

It belongs to the phosphoglycerate mutase family. BPG-dependent PGAM subfamily.

The enzyme catalyses (2R)-2-phosphoglycerate = (2R)-3-phosphoglycerate. It participates in carbohydrate degradation; glycolysis; pyruvate from D-glyceraldehyde 3-phosphate: step 3/5. In terms of biological role, catalyzes the interconversion of 2-phosphoglycerate and 3-phosphoglycerate. The polypeptide is 2,3-bisphosphoglycerate-dependent phosphoglycerate mutase 1 (Bacillus cereus (strain ATCC 10987 / NRS 248)).